The following is a 261-amino-acid chain: tRNA pseudouridine synthase A (261 aa).

The active-site Nucleophile is the D51. Y109 contributes to the substrate binding site.

This sequence belongs to the tRNA pseudouridine synthase TruA family. In terms of assembly, homodimer.

It carries out the reaction uridine(38/39/40) in tRNA = pseudouridine(38/39/40) in tRNA. Formation of pseudouridine at positions 38, 39 and 40 in the anticodon stem and loop of transfer RNAs. The sequence is that of tRNA pseudouridine synthase A from Shewanella sediminis (strain HAW-EB3).